The primary structure comprises 122 residues: Large ribosomal subunit protein uL14 (122 aa).

The protein belongs to the universal ribosomal protein uL14 family. In terms of assembly, part of the 50S ribosomal subunit. Forms a cluster with proteins L3 and L19. In the 70S ribosome, L14 and L19 interact and together make contacts with the 16S rRNA in bridges B5 and B8.

Its function is as follows. Binds to 23S rRNA. Forms part of two intersubunit bridges in the 70S ribosome. This is Large ribosomal subunit protein uL14 from Leifsonia xyli subsp. xyli (strain CTCB07).